The chain runs to 161 residues: Allophycocyanin alpha chain (161 aa).

Asparagine 71 carries the post-translational modification N4-methylasparagine. Cysteine 81 contacts (2R,3E)-phycocyanobilin.

This sequence belongs to the phycobiliprotein family. Component of the phycobilisome. Heterodimer of an alpha and a beta chain. Contains one covalently linked phycocyanobilin chromophore.

Its subcellular location is the cellular thylakoid membrane. Light-harvesting photosynthetic bile pigment-protein from the phycobiliprotein complex. Allophycocyanin has a maximum absorption at approximately 650 nanometers. In Arthrospira platensis (Spirulina platensis), this protein is Allophycocyanin alpha chain (apcA).